The sequence spans 120 residues: Large ribosomal subunit protein uL14 (120 aa).

It belongs to the universal ribosomal protein uL14 family. In terms of assembly, part of the 50S ribosomal subunit. Forms a cluster with proteins L3 and L19. In the 70S ribosome, L14 and L19 interact and together make contacts with the 16S rRNA in bridges B5 and B8.

In terms of biological role, binds to 23S rRNA. Forms part of two intersubunit bridges in the 70S ribosome. In Phytoplasma australiense, this protein is Large ribosomal subunit protein uL14.